Reading from the N-terminus, the 154-residue chain is Lipoprotein signal peptidase (154 aa).

The next 2 helical transmembrane spans lie at 55 to 75 and 84 to 104; these read GHMWFFYLITVVVIGIIIYIM and LFSISLAFILGGAIGNFIDRV. Catalysis depends on residues D111 and D129. The helical transmembrane segment at 124–144 threads the bilayer; that stretch reads IFNVADASLSVGVVLMLVYVF.

The protein belongs to the peptidase A8 family.

The protein resides in the cell membrane. It catalyses the reaction Release of signal peptides from bacterial membrane prolipoproteins. Hydrolyzes -Xaa-Yaa-Zaa-|-(S,diacylglyceryl)Cys-, in which Xaa is hydrophobic (preferably Leu), and Yaa (Ala or Ser) and Zaa (Gly or Ala) have small, neutral side chains.. It functions in the pathway protein modification; lipoprotein biosynthesis (signal peptide cleavage). In terms of biological role, this protein specifically catalyzes the removal of signal peptides from prolipoproteins. The protein is Lipoprotein signal peptidase of Listeria monocytogenes serovar 1/2a (strain ATCC BAA-679 / EGD-e).